Consider the following 887-residue polypeptide: Translation initiation factor IF-2 (887 aa).

The interval 1–291 (MTDQADTSER…RRRVERERKK (291 aa)) is disordered. Residues 58–117 (AAPAAAPAAAPAAAEEVAKKPVAAPEVKPAAPVEERPAPVAKAAPEVKAVPAPAPAAAPA) show a composition bias toward low complexity. 4 stretches are compositionally biased toward basic and acidic residues: residues 148–178 (SARE…EAER), 185–194 (AAEEASRHTA), 201–215 (RAAE…DDRP), and 267–276 (AFDDESERQR). The region spanning 385 to 553 (ARAPVVTVMG…TILLQAELLD (169 aa)) is the tr-type G domain. Positions 394 to 401 (GHVDHGKT) are G1. 394 to 401 (GHVDHGKT) provides a ligand contact to GTP. Residues 419 to 423 (GITQH) form a G2 region. Residues 441–444 (DTPG) form a G3 region. Residues 441–445 (DTPGH) and 495–498 (NKMD) contribute to the GTP site. Positions 495-498 (NKMD) are G4. The segment at 531–533 (SAK) is G5.

This sequence belongs to the TRAFAC class translation factor GTPase superfamily. Classic translation factor GTPase family. IF-2 subfamily.

The protein resides in the cytoplasm. Functionally, one of the essential components for the initiation of protein synthesis. Protects formylmethionyl-tRNA from spontaneous hydrolysis and promotes its binding to the 30S ribosomal subunits. Also involved in the hydrolysis of GTP during the formation of the 70S ribosomal complex. In Parvibaculum lavamentivorans (strain DS-1 / DSM 13023 / NCIMB 13966), this protein is Translation initiation factor IF-2.